Reading from the N-terminus, the 210-residue chain is Large ribosomal subunit protein uL4 (210 aa).

The tract at residues 46–96 (QGNASTKTRAEVRGGGRKPWRQKGTGRARAGSNRSPLWRGGGVIFGPKPRD) is disordered. A compositionally biased stretch (basic residues) spans 60–71 (GGRKPWRQKGTG).

Belongs to the universal ribosomal protein uL4 family. In terms of assembly, part of the 50S ribosomal subunit.

Its function is as follows. One of the primary rRNA binding proteins, this protein initially binds near the 5'-end of the 23S rRNA. It is important during the early stages of 50S assembly. It makes multiple contacts with different domains of the 23S rRNA in the assembled 50S subunit and ribosome. In terms of biological role, forms part of the polypeptide exit tunnel. The sequence is that of Large ribosomal subunit protein uL4 from Gloeothece citriformis (strain PCC 7424) (Cyanothece sp. (strain PCC 7424)).